Reading from the N-terminus, the 318-residue chain is NADH-ubiquinone oxidoreductase chain 1 (318 aa).

8 helical membrane-spanning segments follow: residues 3-23, 69-89, 100-120, 135-155, 171-191, 213-233, 253-273, and 294-314; these read TTNI…LTLV, FMFT…WIPL, LGIL…LWSG, AVAQ…SLVL, HMWL…STLA, VEYA…NIIL, ELHT…FLWI, and LPLT…FASI.

It belongs to the complex I subunit 1 family.

Its subcellular location is the mitochondrion inner membrane. It carries out the reaction a ubiquinone + NADH + 5 H(+)(in) = a ubiquinol + NAD(+) + 4 H(+)(out). Core subunit of the mitochondrial membrane respiratory chain NADH dehydrogenase (Complex I) that is believed to belong to the minimal assembly required for catalysis. Complex I functions in the transfer of electrons from NADH to the respiratory chain. The immediate electron acceptor for the enzyme is believed to be ubiquinone. This Choloepus didactylus (Southern two-toed sloth) protein is NADH-ubiquinone oxidoreductase chain 1 (MT-ND1).